A 510-amino-acid chain; its full sequence is Ectonucleoside triphosphate diphosphohydrolase 1 (510 aa).

Residues 1–16 are Cytoplasmic-facing; the sequence is MEDIKDSKVKRFCSKN. Residues 17 to 37 traverse the membrane as a helical segment; sequence ILIILGFTSILAVIALIAVGL. The Extracellular portion of the chain corresponds to 38–478; sequence TQNKPLPENV…SPPLPHSTYI (441 aa). The N-linked (GlcNAc...) asparagine glycan is linked to N73. C84 and C108 are joined by a disulfide. E174 (proton acceptor) is an active-site residue. N-linked (GlcNAc...) asparagine glycosylation is found at N226, N291, and N333. Disulfide bonds link C254/C300 and C281/C324. 2 cysteine pairs are disulfide-bonded: C337-C342 and C391-C414. N-linked (GlcNAc...) asparagine glycans are attached at residues N428 and N457. Residues 479-499 traverse the membrane as a helical segment; that stretch reads GLMVLFSLLLVAVAITGLFIY. Over 500–510 the chain is Cytoplasmic; that stretch reads SKPSYFWKEAV.

It belongs to the GDA1/CD39 NTPase family. Homodimer; disulfide-linked. Ca(2+) is required as a cofactor. It depends on Mg(2+) as a cofactor. Post-translationally, N-glycosylated. The N-terminus is blocked. In terms of processing, palmitoylated on Cys-13; which is required for caveola targeting.

It localises to the membrane. It is found in the caveola. The catalysed reaction is a ribonucleoside 5'-triphosphate + 2 H2O = a ribonucleoside 5'-phosphate + 2 phosphate + 2 H(+). The enzyme catalyses a ribonucleoside 5'-triphosphate + H2O = a ribonucleoside 5'-diphosphate + phosphate + H(+). It catalyses the reaction a ribonucleoside 5'-diphosphate + H2O = a ribonucleoside 5'-phosphate + phosphate + H(+). It carries out the reaction ATP + 2 H2O = AMP + 2 phosphate + 2 H(+). The catalysed reaction is ATP + H2O = ADP + phosphate + H(+). The enzyme catalyses ADP + H2O = AMP + phosphate + H(+). It catalyses the reaction CTP + 2 H2O = CMP + 2 phosphate + 2 H(+). It carries out the reaction CTP + H2O = CDP + phosphate + H(+). The catalysed reaction is CDP + H2O = CMP + phosphate + H(+). The enzyme catalyses GTP + 2 H2O = GMP + 2 phosphate + 2 H(+). It catalyses the reaction GTP + H2O = GDP + phosphate + H(+). It carries out the reaction GDP + H2O = GMP + phosphate + H(+). The catalysed reaction is ITP + 2 H2O = IMP + 2 phosphate + 2 H(+). The enzyme catalyses ITP + H2O = IDP + phosphate + H(+). It catalyses the reaction IDP + H2O = IMP + phosphate + H(+). It carries out the reaction UTP + 2 H2O = UMP + 2 phosphate + 2 H(+). The catalysed reaction is UTP + H2O = UDP + phosphate + H(+). The enzyme catalyses UDP + H2O = UMP + phosphate + H(+). Functionally, catalyzes the hydrolysis of both di- and triphosphate nucleotides (NDPs and NTPs) and hydrolyze NTPs to nucleotide monophosphates (NMPs) in two distinct successive phosphate-releasing steps, with NDPs as intermediates and participates in the regulation of extracellular levels of nucleotides. By hydrolyzing proinflammatory ATP and platelet-activating ADP to AMP, it blocks platelet aggregation and supports blood flow. This Mus musculus (Mouse) protein is Ectonucleoside triphosphate diphosphohydrolase 1.